We begin with the raw amino-acid sequence, 302 residues long: MTHTEVVCAVVVTHRRRELLATSLDAVVSQDRKPDHLIVVDNDNDPQVRELVTGQPVPSTYLGSRRNLGGAGGFALGMLHALALGADWIWLADDDGRPADTTVLSTLLSCAHTHSLAEVSPMVCNLDDPQRLAFPLRRGLVWRRLTSELRTDSSSSSGDLLPGIASLFNGALFRADTVDAVGVPDLRLFVRGDEVELHRRLVRSGLPFGTCLTASYLHPCGTDEFKPILGGRMHTQYPDDETKRFFTYRNRGYLLSQPGLRKLLPQEWLRFGWYFLVSRRDLAGLREWIRLRRLGRRERFQR.

Belongs to the glycosyltransferase 2 family.

The protein localises to the cell membrane. It localises to the secreted. It is found in the cell wall. It carries out the reaction alpha-L-rhamnosyl-(1-&gt;3)-N-acetyl-alpha-D-glucosaminyl-diphospho-trans,octa-cis-decaprenol + 2 UDP-alpha-D-galactofuranose = beta-D-galactofuranosyl-(1-&gt;5)-beta-D-galactofuranosyl-(1-&gt;4)-alpha-L-rhamnosyl-(1-&gt;3)-N-acetyl-alpha-D-glucosaminyl-diphospho-trans,octa-cis-decaprenol + 2 UDP + 2 H(+). It functions in the pathway cell wall biogenesis; cell wall polysaccharide biosynthesis. Involved in the biosynthesis of the arabinogalactan (AG) region of the mycolylarabinogalactan-peptidoglycan (mAGP) complex, an essential component of the mycobacterial cell wall. Catalyzes the transfer of the first two galactofuranosyl (Galf) units from UDP-galactofuranose (UDP-Galf) onto the rhamnosyl-GlcNAc-diphospho-decaprenol (Rha-GlcNAc-PP-C50) acceptor, yielding galactofuranosyl-galactofuranosyl-rhamnosyl-GlcNAc-diphospho-decaprenol (Galf-Galf-Rha-GlcNAc-PP-C50). Thus, GlfT1 is the initiator of galactan synthesis, while GlfT2 continues with the subsequent polymerization events. The chain is Galactofuranosyltransferase GlfT1 from Mycolicibacterium smegmatis (strain ATCC 700084 / mc(2)155) (Mycobacterium smegmatis).